The following is a 256-amino-acid chain: MTGRDEYYNRAKQEGYRTRSAYKLQQIDADAGVFGPGNTVIDLGAAPGGWLQVAAEAVGPSGTVIGVDFQRIRDLESDIVDTIRGDMTDESTKNALRKRVNNSSVNVVLSDMAPNMTGEYSVDHARSVHLARQAFSVATDILPAGGDFIVKVFDGRDLADFRQDVDTEFEYVKSIRPDASRDSSSEQYLVGKHRITAPVSPGDELDATVVDIGSEGDGIIKIDGYTLFVPGVENGDSVRVRVTDLKSNVGFAEVIE.

Residues G48, W50, D68, D86, and D111 each coordinate S-adenosyl-L-methionine. The active-site Proton acceptor is K151. Residues 198 to 256 enclose the TRAM domain; that stretch reads PVSPGDELDATVVDIGSEGDGIIKIDGYTLFVPGVENGDSVRVRVTDLKSNVGFAEVIE.

This sequence belongs to the class I-like SAM-binding methyltransferase superfamily. RNA methyltransferase RlmE family.

It is found in the cytoplasm. It catalyses the reaction uridine(2552) in 23S rRNA + S-adenosyl-L-methionine = 2'-O-methyluridine(2552) in 23S rRNA + S-adenosyl-L-homocysteine + H(+). Specifically methylates the uridine in position 2552 of 23S rRNA at the 2'-O position of the ribose in the fully assembled 50S ribosomal subunit. This chain is Ribosomal RNA large subunit methyltransferase E, found in Haloquadratum walsbyi (strain DSM 16790 / HBSQ001).